The chain runs to 479 residues: Glucan 1,3-beta-glucosidase 2 (479 aa).

An N-terminal signal peptide occupies residues 1 to 21; it reads MMLFLIHLMALCCMFVAEVAC. Asparagine 25, asparagine 29, asparagine 63, asparagine 104, asparagine 187, and asparagine 193 each carry an N-linked (GlcNAc...) asparagine glycan. Catalysis depends on glutamate 227, which acts as the Proton donor. Asparagine 254, asparagine 285, and asparagine 288 each carry an N-linked (GlcNAc...) asparagine glycan. Catalysis depends on histidine 306, which acts as the Nucleophile. Residues asparagine 318 and asparagine 451 are each glycosylated (N-linked (GlcNAc...) asparagine). A lipid anchor (GPI-anchor amidated serine) is attached at serine 456. A propeptide spans 457–479 (removed in mature form); sequence SASAIASNKMTLLLAFLLVILVI.

The protein belongs to the glycosyl hydrolase 5 (cellulase A) family. Post-translationally, predicted to be a substrate for cleavage by KEX2.

Its subcellular location is the cell membrane. The protein resides in the secreted. The enzyme catalyses Successive hydrolysis of beta-D-glucose units from the non-reducing ends of (1-&gt;3)-beta-D-glucans, releasing alpha-glucose.. Its function is as follows. Beta-glucanases participate in the metabolism of beta-glucan, the main structural component of the cell wall. EXG2 is not heavily involved in the exoglucanase function of the adhesion process. The sequence is that of Glucan 1,3-beta-glucosidase 2 (EXG2) from Candida albicans (strain SC5314 / ATCC MYA-2876) (Yeast).